The sequence spans 269 residues: Gene 51 glycoprotein (269 aa).

N-linked (GlcNAc...) asparagine; by host glycans are attached at residues asparagine 53, asparagine 58, asparagine 74, and asparagine 78. Disordered stretches follow at residues 67–87 (LSTS…TTPY) and 103–137 (MLNS…ASKN). The span at 76–87 (TSNTSYSQTTPY) shows a compositional bias: low complexity. The span at 103 to 112 (MLNSTPNKPL) shows a compositional bias: polar residues. Over residues 113 to 136 (SSTKLTPKSQSSSQSTKTTKQASK) the composition is skewed to low complexity. Asparagine 137, asparagine 161, asparagine 170, and asparagine 191 each carry an N-linked (GlcNAc...) asparagine; by host glycan.

This chain is Gene 51 glycoprotein (51), found in Saimiriine herpesvirus 2 (strain 11) (SaHV-2).